The primary structure comprises 1227 residues: Pentatricopeptide repeat-containing protein At5g15280, mitochondrial (1227 aa).

The transit peptide at 1–31 directs the protein to the mitochondrion; that stretch reads MLNLLSISSSSRLRFLNKVSSLTYHYSFAFF. PPR repeat units lie at residues 146 to 180, 182 to 216, 217 to 251, 255 to 289, 290 to 320, 322 to 356, 357 to 391, 392 to 426, 427 to 461, 527 to 561, 562 to 597, 598 to 632, 633 to 667, 668 to 698, 703 to 737, 738 to 772, 773 to 800, 802 to 836, 837 to 871, 872 to 906, 908 to 942, 943 to 977, 978 to 1012, 1014 to 1044, 1047 to 1081, 1082 to 1116, 1117 to 1151, and 1152 to 1186; these read LPQACEIMASMLIREGMVKEVELLLMEMERHGDTM, NEGIFCDLIGKYVDDFDSRKAVMLFDWMRRKGLVP, LTSCYQILIDQLVRVHRTESAYRICLDWVETRAEL, NIDSIGKVIELLCLDQKVQEARVLARKLVALGCIL, NSSIYSKITIGYNEKQDFEDLLSFIGEVKYE, DVFVGNRILHSLCRRFGSERAYVYMEELEHLGFKQ, DEVTFGILIGWCCYEGDIKRAVLYLSEIMSKGYKP, DVYSYNAILSGLFRKGLWQHTHCILDEMKENGMML, SLSTFKIMVTGYCKARQFEEAKRIVNKMFGYGLIE, VLPEFNSLIVRASEDGDLQTALRLLDEMARWGQKL, SRRSFAVLMRSLCASRAHLRVSISLLEKWPKLAYQL, DGETLNFLVQEYCKKGFSRHSKLIFHKMVQMHHPI, DNVTYTSLIRCFCKKETLNDLLNVWGAAQNDNWLP, DLNDCGDLWNCLVRKGLVEEVVQLFERVFIS, QSEACRIFVEKLTVLGFSCIAHSVVKRLEGEGCIV, EQEVYNHLIKGLCTEKKDSAAFAILDEMLDKKHIP, SLGSCLMLIPRLCRANKAGTAFNLAEQI, SSYVHYALIKGLSLAGKMLDAENQLRIMLSNGLSS, YNKIYNVMFQGYCKGNNWMKVEEVLGLMVRKNIIC, SVKSYREYVRKMCLEPQSLSAISLKEFLLLGESNP, GVIIYNMLIFYMFRAKNHLEVNKVLLEMQGRGVLP, DETTFNFLVHGYSSSADYSSSLRYLSAMISKGMKP, NNRSLRAVTSSLCDNGDVKKALDLWQVMESKGWNL, SSVVQTKIVETLISKGEIPKAEDFLTRVTRN, MAPNYDNIIKKLSDRGNLDIAVHLLNTMLKNQSIP, GSSSYDSVINGLLRYNQLDKAMDFHTEMVELGLSP, SISTWSGLVHKFCEACQVLESERLIKSMVGLGESP, and SQEMFKTVIDRFRVEKNTVKASEMMEMMQKCGYEV.

Belongs to the PPR family. P subfamily.

It is found in the mitochondrion. This Arabidopsis thaliana (Mouse-ear cress) protein is Pentatricopeptide repeat-containing protein At5g15280, mitochondrial.